The sequence spans 528 residues: 4-nitrophenol 4-monooxygenase/4-nitrocatechol 2-monooxygenase, oxygenase component (528 aa).

100-104 (RPPAG) contributes to the substrate binding site. FAD is bound by residues 153–155 (PMF), 159–162 (QFDR), and Thr-194. Residue 205–206 (GN) participates in substrate binding. Residue 461–464 (TMQR) coordinates FAD.

The protein belongs to the FADH(2)-utilizing monooxygenase family. The 4-NP/4-NCA monooxygenase is composed of an oxygenase component NpcA and a reductase component NpcB. Requires FAD as cofactor.

It catalyses the reaction 4-nitrophenol + NADH + O2 + H(+) = 4-nitrocatechol + NAD(+) + H2O. It carries out the reaction 4-nitrocatechol + NADPH + O2 = 2-hydroxy-1,4-benzoquinone + nitrite + NADP(+) + H2O. The catalysed reaction is 4-nitrocatechol + NADH + O2 = 2-hydroxy-1,4-benzoquinone + nitrite + NAD(+) + H2O. It participates in aromatic compound metabolism. Its pathway is xenobiotic degradation. Inhibited by methimazole. Its function is as follows. Involved in the degradation of para-nitrophenol (4-NP). Catalyzes both the initial hydroxylation of 4-NP to produce 4-nitrocatechol (4-NCA) and the subsequent oxidative release of the nitro group from 4-NCA to produce 2-hydroxy-1,4-benzoquinone. It can also use 4-nitroresorcinol as substrate with a rate of nitrite release similar to that observed with the two physiological substrates, 4-PN and 4-NCA. In Rhodococcus opacus (Nocardia opaca), this protein is 4-nitrophenol 4-monooxygenase/4-nitrocatechol 2-monooxygenase, oxygenase component (npcA).